We begin with the raw amino-acid sequence, 289 residues long: 4-diphosphocytidyl-2-C-methyl-D-erythritol kinase (289 aa).

Lys-11 is an active-site residue. Position 96–106 (96–106 (PVAAGIGGGSS)) interacts with ATP. The active site involves Asp-138.

This sequence belongs to the GHMP kinase family. IspE subfamily.

It catalyses the reaction 4-CDP-2-C-methyl-D-erythritol + ATP = 4-CDP-2-C-methyl-D-erythritol 2-phosphate + ADP + H(+). It participates in isoprenoid biosynthesis; isopentenyl diphosphate biosynthesis via DXP pathway; isopentenyl diphosphate from 1-deoxy-D-xylulose 5-phosphate: step 3/6. Catalyzes the phosphorylation of the position 2 hydroxy group of 4-diphosphocytidyl-2C-methyl-D-erythritol. In Azorhizobium caulinodans (strain ATCC 43989 / DSM 5975 / JCM 20966 / LMG 6465 / NBRC 14845 / NCIMB 13405 / ORS 571), this protein is 4-diphosphocytidyl-2-C-methyl-D-erythritol kinase.